Reading from the N-terminus, the 831-residue chain is V-type proton ATPase subunit a (831 aa).

The Cytoplasmic segment spans residues 1–418 (MSPSLFRSEE…DSYGIATYRE (418 aa)). The helical transmembrane segment at 419–437 (VNHGIVAIVTFPFLFAIMF) threads the bilayer. Over 438–439 (GD) the chain is Vacuolar. The helical transmembrane segment at 440–456 (LGHGAIMASVALMFVLY) threads the bilayer. Residues 457–471 (EKTLGAKKDLDEIVG) are Cytoplasmic-facing. The helical transmembrane segment at 472–501 (MVFYGRYIVLLMGLFSMYVGFVYNDLFSKP) threads the bilayer. At 502-548 (MSIFSSRWVWPVKSEEAIARAVQVGTYPIGIDPTWHSADNNLLFMNS) the chain is on the vacuolar side. Residues 549–568 (YKMKLSIILGVIHMTFCLFL) traverse the membrane as a helical segment. Residues 569–586 (SLSNYRFFKRKLDIYAVF) are Cytoplasmic-facing. A helical membrane pass occupies residues 587-607 (VPSLIFLEAIFGYLVITIVYK). Residues 608–650 (WCIDWKAKDLQPPSLLNMLILMFLSPGTLEDQLYPGQKYLQVG) lie on the Vacuolar side of the membrane. A helical transmembrane segment spans residues 651–670 (LVIAALICVPWLLIVKPFVL). At 671–723 (WRRHSNEENKYQSLNSDLPNVDEADALMAVDSQEKQAEPFELGEVVIHQVIHT) the chain is on the cytoplasmic side. Residues 724–748 (IEFCLGCVSHTASYLRLWALSLAHN) traverse the membrane as a helical segment. The Vacuolar portion of the chain corresponds to 749–769 (QLSSVLWNMTLANGFRMTGIV). Residues 770–808 (GSIFVVILFGFWFIATCVVLVAMEGTSAMLHSLRLHWVE) traverse the membrane as a helical segment. Residues 809–831 (GMSKHFEGEGYAFTPFTFKVTAE) are Cytoplasmic-facing.

It belongs to the V-ATPase 116 kDa subunit family. In terms of assembly, V-ATPase is a heteromultimeric enzyme composed of a peripheral catalytic V1 complex (components A to H) attached to an integral membrane V0 proton pore complex (components: a, c, c', c'', d, e, f and VOA1).

The protein resides in the vacuole membrane. Subunit of the V0 complex of vacuolar(H+)-ATPase (V-ATPase), a multisubunit enzyme composed of a peripheral complex (V1) that hydrolyzes ATP and a membrane integral complex (V0) that translocates protons. V-ATPase is responsible for acidifying and maintaining the pH of intracellular compartments. The sequence is that of V-type proton ATPase subunit a (vph1) from Schizosaccharomyces pombe (strain 972 / ATCC 24843) (Fission yeast).